We begin with the raw amino-acid sequence, 277 residues long: MKLNEKLYAFFSEHVEQMAEEWIETMEESDPNSLYALHNATVTEELKEQDREFYRHLNYMYVLPEKQFLEEFQEWVIELTNDQKHLDTPVQYVIREFMRNRRLYTKYFEKFAEENESAFEPGEKQKWADLIVKVFDFTIYTFVDHAEMNAKQQLNAQREMILELSSPVITLSKSTALLPLVGDIDTERAKFILENTLQACAKRRVEHLLIDLSGVVVVDTMVAHQIFKLIEALNLIGVRSTLSGIRPEIAQTAVQLGIDFSNITIKTNLAQALNYHQ.

The 112-residue stretch at 165-276 (SSPVITLSKS…TNLAQALNYH (112 aa)) folds into the STAS domain. Phosphothreonine is present on Thr-186.

As to quaternary structure, interacts with RsbRA and RsbS in the stressosome. The stressosome probably also contains RsbRC and RsbRD. Phosphorylated by RsbT.

Its function is as follows. One of 4 functionally non-identical RsbR paralogs, it functions in the environmental signaling branch of the general stress response. Negative regulator of sigma-B activity. Non-phosphorylated RsbS binds to RsbT, preventing its association with RsbU. Requires any one of RsbRA, RsbRB, RsbRC or RsbRD to sequester RsbT. When RsbS and the RsbR paralog(s) are phosphorylated, they release RsbT, which can then bind and activate RsbU. The chain is RsbT co-antagonist protein RsbRB (rsbRB) from Bacillus subtilis (strain 168).